Consider the following 635-residue polypeptide: Probable clathrin assembly protein At4g32285 (635 aa).

The region spanning 23–159 is the ENTH domain; sequence VASNMAPDLE…ELALFERRGR (137 aa). The disordered stretch occupies residues 157–208; it reads RGRNGGGSSSSHQSNGDDGYNRSRDDFRSPPPRTYDYETGNGFGMPKRSRSF. Low complexity predominate over residues 165–174; sequence SSSHQSNGDD. Positions 175 to 184 are enriched in basic and acidic residues; the sequence is GYNRSRDDFR. Phosphoserine is present on serine 207. Position 224 is a phosphothreonine (threonine 224). Over residues 357-369 the composition is skewed to basic and acidic residues; sequence AKRAKSPERKEIE. Positions 357 to 412 are disordered; sequence AKRAKSPERKEIEAPPAPAPPVEEPVDMNEIKALPPPENHTPPPPPAPEPKPQQPQ. Pro residues predominate over residues 390-409; sequence LPPPENHTPPPPPAPEPKPQ.

The protein resides in the membrane. The protein localises to the clathrin-coated pit. Its subcellular location is the golgi apparatus. It is found in the cytoplasmic vesicle. It localises to the clathrin-coated vesicle. The sequence is that of Probable clathrin assembly protein At4g32285 from Arabidopsis thaliana (Mouse-ear cress).